The chain runs to 179 residues: Cytochrome b6-f complex iron-sulfur subunit 1 (179 aa).

The helical transmembrane segment at 21–43 threads the bilayer; sequence LLTFGTVTGVALGALYPVVNYFI. Residues 61–162 form the Rieske domain; the sequence is GNDVSVSKFL…AKTENDKIVL (102 aa). [2Fe-2S] cluster contacts are provided by Cys108, His110, Cys126, and His129. Cys113 and Cys128 form a disulfide bridge.

Belongs to the Rieske iron-sulfur protein family. In terms of assembly, the 4 large subunits of the cytochrome b6-f complex are cytochrome b6, subunit IV (17 kDa polypeptide, PetD), cytochrome f and the Rieske protein, while the 4 small subunits are PetG, PetL, PetM and PetN. The complex functions as a dimer. [2Fe-2S] cluster is required as a cofactor.

It localises to the cellular thylakoid membrane. It catalyses the reaction 2 oxidized [plastocyanin] + a plastoquinol + 2 H(+)(in) = 2 reduced [plastocyanin] + a plastoquinone + 4 H(+)(out). Component of the cytochrome b6-f complex, which mediates electron transfer between photosystem II (PSII) and photosystem I (PSI), cyclic electron flow around PSI, and state transitions. The chain is Cytochrome b6-f complex iron-sulfur subunit 1 from Trichormus variabilis (strain ATCC 29413 / PCC 7937) (Anabaena variabilis).